A 428-amino-acid polypeptide reads, in one-letter code: Putative POM121-like protein 1 (428 aa).

Disordered regions lie at residues 1–23, 36–204, 254–293, 306–384, and 402–428; these read MDSL…RLSP, KESG…KFPL, DCRP…HKSQ, TEVP…PSTL, and GPQP…SCPK. A compositionally biased stretch (basic and acidic residues) spans 44-62; that stretch reads EQDKDPRVQENPGDQRRVP. Residues 106–117 show a composition bias toward low complexity; sequence QTSQTSWTSSCT. 5 stretches are compositionally biased toward polar residues: residues 118–129, 144–155, 260–269, 326–347, and 403–415; these read NRNAISSSYSST, SHCQLTLSSSKT, PSHTLSSLAT, FSSS…QVTS, and PQPQ…RGQN. Positions 416 to 428 are enriched in low complexity; that stretch reads QRSQTSRTSSCPK.

This sequence belongs to the POM121 family.

This is Putative POM121-like protein 1 (POM121L1P) from Homo sapiens (Human).